Consider the following 270-residue polypeptide: uncharacterized protein (270 aa).

Basic and acidic residues-rich tracts occupy residues 1–13 (MSEF…KDLY) and 49–73 (EVER…KEEK). Disordered regions lie at residues 1-76 (MSEF…KQEE), 90-111 (STSP…PQTE), and 204-270 (KKRR…FRTE). Residues 90 to 102 (STSPAQEEQGSST) show a composition bias toward polar residues. Residues 204 to 216 (KKRRPGQKQRAAK) show a composition bias toward basic residues. Residues 218–235 (LALERTKERDTKAREIKK) are compositionally biased toward basic and acidic residues. The segment covering 236-253 (QLKKKFHKRGGKKNKKKV) has biased composition (basic residues).

This is an uncharacterized protein from Saccharomyces cerevisiae (strain ATCC 204508 / S288c) (Baker's yeast).